The sequence spans 306 residues: Large ribosomal subunit protein uL18 (306 aa).

This sequence belongs to the universal ribosomal protein uL18 family. As to quaternary structure, component of the large ribosomal subunit (LSU).

The protein resides in the cytoplasm. It localises to the nucleus. In terms of biological role, component of the ribosome, a large ribonucleoprotein complex responsible for the synthesis of proteins in the cell. The small ribosomal subunit (SSU) binds messenger RNAs (mRNAs) and translates the encoded message by selecting cognate aminoacyl-transfer RNA (tRNA) molecules. The large subunit (LSU) contains the ribosomal catalytic site termed the peptidyl transferase center (PTC), which catalyzes the formation of peptide bonds, thereby polymerizing the amino acids delivered by tRNAs into a polypeptide chain. The nascent polypeptides leave the ribosome through a tunnel in the LSU and interact with protein factors that function in enzymatic processing, targeting, and the membrane insertion of nascent chains at the exit of the ribosomal tunnel. The polypeptide is Large ribosomal subunit protein uL18 (RPL5) (Theileria annulata).